A 405-amino-acid polypeptide reads, in one-letter code: ATP phosphoribosyltransferase regulatory subunit (405 aa).

Belongs to the class-II aminoacyl-tRNA synthetase family. HisZ subfamily. In terms of assembly, heteromultimer composed of HisG and HisZ subunits.

It is found in the cytoplasm. The protein operates within amino-acid biosynthesis; L-histidine biosynthesis; L-histidine from 5-phospho-alpha-D-ribose 1-diphosphate: step 1/9. Its function is as follows. Required for the first step of histidine biosynthesis. May allow the feedback regulation of ATP phosphoribosyltransferase activity by histidine. The protein is ATP phosphoribosyltransferase regulatory subunit of Oceanobacillus iheyensis (strain DSM 14371 / CIP 107618 / JCM 11309 / KCTC 3954 / HTE831).